The primary structure comprises 171 residues: 3-hydroxydecanoyl-[acyl-carrier-protein] dehydratase (171 aa).

His70 is a catalytic residue.

The protein belongs to the thioester dehydratase family. FabA subfamily. As to quaternary structure, homodimer.

Its subcellular location is the cytoplasm. The enzyme catalyses a (3R)-hydroxyacyl-[ACP] = a (2E)-enoyl-[ACP] + H2O. The catalysed reaction is (3R)-hydroxydecanoyl-[ACP] = (2E)-decenoyl-[ACP] + H2O. It carries out the reaction (2E)-decenoyl-[ACP] = (3Z)-decenoyl-[ACP]. Its pathway is lipid metabolism; fatty acid biosynthesis. Its function is as follows. Necessary for the introduction of cis unsaturation into fatty acids. Catalyzes the dehydration of (3R)-3-hydroxydecanoyl-ACP to E-(2)-decenoyl-ACP and then its isomerization to Z-(3)-decenoyl-ACP. Can catalyze the dehydratase reaction for beta-hydroxyacyl-ACPs with saturated chain lengths up to 16:0, being most active on intermediate chain length. The polypeptide is 3-hydroxydecanoyl-[acyl-carrier-protein] dehydratase (Pseudomonas syringae pv. tomato (strain ATCC BAA-871 / DC3000)).